A 658-amino-acid polypeptide reads, in one-letter code: MTVSTSSAFHHSPLSDDVEPIIQKATRALLEKQHQDGHWVFELEADATIPAEYILLKHYLGEPQDLEIEAKIGRYLRRIQGEHGGWSLFYGGDLDLSATVKAYFALKMIGDSPDAPHMLRARNEILARGGAMRANVFTRIQLALFGAMSWEHVPQMPVELMLMPEWFPVHINKMAYWARTVLVPLLVLQALKPVARNRRGILVDELFVPDVLPTLQESGDPIWRRFFSALDKVLHKVEPYWPKNMRAKAIHSCVHFVTERLNGEDGLGAIYPAIANSVMMYDALGYPENHPERAIARRAVEKLMVLDGTEDQGDKEVYCQPCLSPIWDTALVAHAMLEVGGDEAEKSAISALSWLKPQQILDVKGDWAWRRPDLRPGGWAFQYRNDYYPDVDDTAVVTMAMDRAAKLSDLRDDFEESKARAMEWTIGMQSDNGGWGAFDANNSYTYLNNIPFADHGALLDPPTVDVSARCVSMMAQAGISITDPKMKAAVDYLLKEQEEDGSWFGRWGVNYIYGTWSALCALNVAALPHDHLAIQKAVAWLKTIQNEDGGWGENCDSYALDYSGYEPMDSTASQTAWALLGLMAVGEANSEAVTKGINWLAQNQDEEGLWKEDYYSGGGFPRVFYLRYHGYSKYFPLWALARYRNLKKANQPIVHYGM.

The stretch at 69–110 (EAKIGRYLRRIQGEHGGWSLFYGGDLDLSATVKAYFALKMIG) is one PFTB 1 repeat. Catalysis depends on D392, which acts as the Proton donor. PFTB repeat units follow at residues 418 to 459 (KARA…GALL), 486 to 526 (MKAA…NVAA), and 534 to 584 (IQKA…GLMA).

The protein belongs to the terpene cyclase/mutase family.

The protein localises to the cell membrane. The catalysed reaction is squalene = hop-22(29)-ene. It carries out the reaction squalene + H2O = hopan-22-ol. Its pathway is secondary metabolite biosynthesis; hopanoid biosynthesis. Functionally, catalyzes the cyclization of squalene into hopene. This Zymomonas mobilis subsp. mobilis (strain ATCC 31821 / ZM4 / CP4) protein is Squalene--hopene cyclase (shc).